The primary structure comprises 290 residues: Protein-lysine methyltransferase METTL21E (290 aa).

S-adenosyl-L-methionine is bound by residues W96, 124–126 (GAG), D145, W176, and A197.

Belongs to the methyltransferase superfamily. METTL21 family.

In terms of biological role, protein-lysine methyltransferase. This is Protein-lysine methyltransferase METTL21E (METTL21E) from Bos taurus (Bovine).